The chain runs to 426 residues: Serine--tRNA ligase (426 aa).

Threonine 233–glutamate 235 is an L-serine binding site. Arginine 264 to glutamate 266 contacts ATP. Glutamate 287 contributes to the L-serine binding site. An ATP-binding site is contributed by glutamate 351 to serine 354. L-serine is bound at residue serine 387.

This sequence belongs to the class-II aminoacyl-tRNA synthetase family. Type-1 seryl-tRNA synthetase subfamily. In terms of assembly, homodimer. The tRNA molecule binds across the dimer.

The protein localises to the cytoplasm. It catalyses the reaction tRNA(Ser) + L-serine + ATP = L-seryl-tRNA(Ser) + AMP + diphosphate + H(+). The catalysed reaction is tRNA(Sec) + L-serine + ATP = L-seryl-tRNA(Sec) + AMP + diphosphate + H(+). Its pathway is aminoacyl-tRNA biosynthesis; selenocysteinyl-tRNA(Sec) biosynthesis; L-seryl-tRNA(Sec) from L-serine and tRNA(Sec): step 1/1. Catalyzes the attachment of serine to tRNA(Ser). Is also able to aminoacylate tRNA(Sec) with serine, to form the misacylated tRNA L-seryl-tRNA(Sec), which will be further converted into selenocysteinyl-tRNA(Sec). This Xylella fastidiosa (strain M23) protein is Serine--tRNA ligase.